The chain runs to 274 residues: Rhamnulose-1-phosphate aldolase (274 aa).

Glu117 is an active-site residue. 3 residues coordinate Zn(2+): His141, His143, and His212.

It belongs to the aldolase class II family. RhaD subfamily. Homotetramer. The cofactor is Zn(2+).

Its subcellular location is the cytoplasm. The catalysed reaction is L-rhamnulose 1-phosphate = (S)-lactaldehyde + dihydroxyacetone phosphate. It functions in the pathway carbohydrate degradation; L-rhamnose degradation; glycerone phosphate from L-rhamnose: step 3/3. In terms of biological role, catalyzes the reversible cleavage of L-rhamnulose-1-phosphate to dihydroxyacetone phosphate (DHAP) and L-lactaldehyde. In Yersinia pseudotuberculosis serotype I (strain IP32953), this protein is Rhamnulose-1-phosphate aldolase.